Reading from the N-terminus, the 186-residue chain is Translation initiation factor IF-3 (186 aa).

This sequence belongs to the IF-3 family. In terms of assembly, monomer.

The protein resides in the cytoplasm. IF-3 binds to the 30S ribosomal subunit and shifts the equilibrium between 70S ribosomes and their 50S and 30S subunits in favor of the free subunits, thus enhancing the availability of 30S subunits on which protein synthesis initiation begins. This chain is Translation initiation factor IF-3, found in Borreliella afzelii (strain PKo) (Borrelia afzelii).